A 508-amino-acid chain; its full sequence is CBL-interacting protein kinase 19 (508 aa).

Residues 1 to 24 (MAATPPSSQHRRPLSSSASAASLA) form a disordered region. The segment covering 14 to 24 (LSSSASAASLA) has biased composition (low complexity). A Protein kinase domain is found at 37–291 (YELGRLLGHG…VKEVMESRWF (255 aa)). Residues 43 to 51 (LGHGTFAKV) and Lys-66 contribute to the ATP site. The active-site Proton acceptor is the Asp-159. Residues 177–206 (DFGLSAVADQFHPDGLLHTFCGTPSYVAPE) form an activation loop region. The segment at 311-372 (ADGDNDMPEL…EERRQRPLGS (62 aa)) is disordered. Over residues 313–322 (GDNDMPELEP) the composition is skewed to acidic residues. The span at 323-337 (SEPPPPPPFPPPPPQ) shows a compositional bias: pro residues. The span at 338–347 (QDDDGEESGW) shows a compositional bias: acidic residues. The NAF domain occupies 354 to 398 (ASCPATLSSEERRQRPLGSLTRPASLNAFDIISFSKGFDLSGLFE). The segment at 401–430 (GSEVRFISAEPMQTIITKLEEIAKVKSFFV) is PPI.

Belongs to the protein kinase superfamily. CAMK Ser/Thr protein kinase family. SNF1 subfamily. The cofactor is Mn(2+). Post-translationally, autophosphorylated. In terms of tissue distribution, expressed in roots, leaf blades and sheaths and panicles.

The enzyme catalyses L-seryl-[protein] + ATP = O-phospho-L-seryl-[protein] + ADP + H(+). It catalyses the reaction L-threonyl-[protein] + ATP = O-phospho-L-threonyl-[protein] + ADP + H(+). In terms of biological role, CIPK serine-threonine protein kinases interact with CBL proteins. Binding of a CBL protein to the regulatory NAF domain of CIPK protein lead to the activation of the kinase in a calcium-dependent manner. The polypeptide is CBL-interacting protein kinase 19 (CIPK19) (Oryza sativa subsp. japonica (Rice)).